We begin with the raw amino-acid sequence, 141 residues long: Hemoglobin subunit alpha-A (141 aa).

Positions 1-141 constitute a Globin domain; the sequence is VLSAADKTNV…VGAVLTAKYR (141 aa). H58 serves as a coordination point for O2. H87 is a binding site for heme b.

Belongs to the globin family. Heterotetramer of two alpha chains and two beta chains. In terms of tissue distribution, red blood cells.

Its function is as follows. Involved in oxygen transport from the lung to the various peripheral tissues. In Cygnus olor (Mute swan), this protein is Hemoglobin subunit alpha-A (HBAA).